Here is a 194-residue protein sequence, read N- to C-terminus: Imidazoleglycerol-phosphate dehydratase (194 aa).

It belongs to the imidazoleglycerol-phosphate dehydratase family.

Its subcellular location is the cytoplasm. It catalyses the reaction D-erythro-1-(imidazol-4-yl)glycerol 3-phosphate = 3-(imidazol-4-yl)-2-oxopropyl phosphate + H2O. It participates in amino-acid biosynthesis; L-histidine biosynthesis; L-histidine from 5-phospho-alpha-D-ribose 1-diphosphate: step 6/9. The polypeptide is Imidazoleglycerol-phosphate dehydratase (Thermus thermophilus (strain ATCC 27634 / DSM 579 / HB8)).